The following is a 435-amino-acid chain: Membrane-bound ghrelin O-acyltransferase MBOAT4 (435 aa).

The Lumenal portion of the chain corresponds to 1-5 (MDWLQ). The chain crosses the membrane as a helical span at residues 6–26 (FFFLHPVSLYQGAAFPFALLF). Residues 27-40 (NYLCITESFPTRAR) lie on the Cytoplasmic side of the membrane. A helical membrane pass occupies residues 41 to 56 (YLFLLAGGGVLALAAM). The Lumenal portion of the chain corresponds to 57–59 (GPY). A helical transmembrane segment spans residues 60–76 (ALLIFIPALCAVAMISS). At 77 to 82 (LSPQEV) the chain is on the cytoplasmic side. The chain crosses the membrane as a helical span at residues 83–101 (HGLTFFFQMGWQTLCHLGL). Topologically, residues 102–120 (HYKEYYLCEPPPVRFYITL) are lumenal. A helical transmembrane segment spans residues 121–136 (SSLMLLTQRVTSLSLD). Residues 137–206 (ISEGKVEAAW…YPSISFWALT (70 aa)) lie on the Cytoplasmic side of the membrane. A helical transmembrane segment spans residues 207 to 227 (WRGLQILGLECLKVALRRVVS). The Lumenal portion of the chain corresponds to 228–240 (AGAGLDDCQRLEC). Residues 241 to 261 (IYIMWSTAGLFKLTYYSHWIL) form a helical membrane-spanning segment. Over 262 to 324 (DDSLLHAAGF…KRLVFQRSRR (63 aa)) the chain is Cytoplasmic. Residues asparagine 307 and histidine 338 contribute to the active site. A helical membrane pass occupies residues 325–338 (WPVLQTFAFSAWWH). Topologically, residues 339–340 (GL) are lumenal. The chain crosses the membrane as a helical span at residues 341–357 (HPGQVFGFLCWSVMVKA). Over 358-376 (DYLIHTFANGCIRSWPLRL) the chain is Cytoplasmic. The helical transmembrane segment at 377–397 (LYRSLTWAHTQIIIAYVMLAV) threads the bilayer. At 398–407 (EGRSFSSLCR) the chain is on the lumenal side. The chain crosses the membrane as a helical span at residues 408 to 428 (LCCSYNSIFPVTYCLLLFLLA). Topologically, residues 429 to 435 (RRKHKCN) are cytoplasmic.

The protein belongs to the membrane-bound acyltransferase family. As to quaternary structure, monomer. Not glycosylated.

The protein resides in the endoplasmic reticulum membrane. It carries out the reaction octanoyl-CoA + L-seryl-[protein] = O-octanoyl-L-seryl-[protein] + CoA. The catalysed reaction is decanoyl-CoA + L-seryl-[protein] = O-decanoyl-L-seryl-[protein] + CoA. The enzyme catalyses L-seryl-[protein] + acetyl-CoA = O-acetyl-L-seryl-[protein] + CoA. It catalyses the reaction L-seryl-[protein] + butanoyl-CoA = O-butanoyl-L-seryl-[protein] + CoA. It carries out the reaction pentanoyl-CoA + L-seryl-[protein] = O-pentanoyl-L-seryl-[protein] + CoA. The catalysed reaction is hexanoyl-CoA + L-seryl-[protein] = O-hexanoyl-L-seryl-[protein] + CoA. The enzyme catalyses heptanoyl-CoA + L-seryl-[protein] = O-heptanoyl-L-seryl-[protein] + CoA. It catalyses the reaction nonanoyl-CoA + L-seryl-[protein] = O-nonanoyl-L-seryl-[protein] + CoA. It carries out the reaction L-seryl-[protein] + dodecanoyl-CoA = O-dodecanoyl-L-seryl-[protein] + CoA. The catalysed reaction is L-seryl-[protein] + tetradecanoyl-CoA = O-tetradecanoyl-L-seryl-[protein] + CoA. The enzyme catalyses a fatty acyl-CoA + L-seryl-[protein] = O-fatty acyl-L-seryl-[protein] + CoA. In terms of biological role, catalyzes ghrelin acylation at 'Ser-3' using preferentially octanoyl-CoA, hexanoyl-CoA and decanoyl-CoA as acyl-CoA donors leading to ghrelin activity. In vitro uses also acyl-CoA donors of different lengths from short-chain (C2) to long-chain fatty acids (C16) knowing that acyl-CoA donors from butanoyl-CoA (C4) to dodecanoyl-CoA (C12) are more efficient compared to longer acyl-CoA donors, such as myristoyl-CoA (C14) and palmitoyl-CoA (C16) that are not efficient. The protein is Membrane-bound ghrelin O-acyltransferase MBOAT4 of Rattus norvegicus (Rat).